The following is a 538-amino-acid chain: Casein kinase I homolog 1 (538 aa).

Positions 39 to 61 are disordered; the sequence is SPARSSMTATTAANSNSNSSRDD. The span at 41-57 shows a compositional bias: low complexity; the sequence is ARSSMTATTAANSNSNS. The Protein kinase domain maps to 69–353; the sequence is YKIGKKIGEG…ETADGQYDWM (285 aa). ATP-binding positions include 75-83 and lysine 98; that span reads IGEGSFGVL. Aspartate 188 acts as the Proton acceptor in catalysis. Disordered regions lie at residues 366-428 and 474-527; these read NKKP…KPKL and QQQL…LAAS. 2 stretches are compositionally biased toward low complexity: residues 391–410 and 474–498; these read QLQM…QQQQ and QQQL…QFGA. Residues serine 522, serine 523, and serine 527 each carry the phosphoserine modification. 2 S-palmitoyl cysteine lipidation sites follow: cysteine 537 and cysteine 538.

The protein belongs to the protein kinase superfamily. CK1 Ser/Thr protein kinase family. Casein kinase I subfamily. In terms of processing, palmitoylated by AKR1.

Its subcellular location is the cell membrane. It localises to the mitochondrion membrane. The enzyme catalyses L-seryl-[protein] + ATP = O-phospho-L-seryl-[protein] + ADP + H(+). It carries out the reaction L-threonyl-[protein] + ATP = O-phospho-L-threonyl-[protein] + ADP + H(+). Functionally, casein kinases are operationally defined by their preferential utilization of acidic proteins such as caseins as substrates. The polypeptide is Casein kinase I homolog 1 (YCK1) (Saccharomyces cerevisiae (strain ATCC 204508 / S288c) (Baker's yeast)).